A 432-amino-acid polypeptide reads, in one-letter code: Crenactin (432 aa).

ATP-binding positions include 20-24, 182-184, 235-239, 354-358, and glutamine 399; these read TSYVK, GGH, EVVKR, and GAFSW.

This sequence belongs to the actin family. Monomer. The crenactin monomers polymerize into right-handed helical filaments, with 8 subunits per complete turn of the helix. Forms single-stranded filaments under high salt concentrations and double-stranded filaments under low salt concentrations. Interacts with arcadin-1 and arcadin-2.

The protein localises to the cytoplasm. Its subcellular location is the cytoskeleton. The enzyme catalyses ATP + H2O = ADP + phosphate + H(+). With respect to regulation, crenactin polymerization is inhibited by interaction with arcadin-2. Also significantly inhibited by elevated antibiotic A22 concentrations. Functionally, forms the backbone of an actin-like archaeal cytoskeleton, which is involved in cell shape determination. Has ATPase activity. Shows highest activity towards ATP or GTP as nucleotide, and only residual activity on UTP, CTP and dNTPs. The chain is Crenactin from Pyrobaculum calidifontis (strain DSM 21063 / JCM 11548 / VA1).